We begin with the raw amino-acid sequence, 156 residues long: Small ribosomal subunit protein uS7 (156 aa).

Belongs to the universal ribosomal protein uS7 family. Part of the 30S ribosomal subunit. Contacts proteins S9 and S11.

Functionally, one of the primary rRNA binding proteins, it binds directly to 16S rRNA where it nucleates assembly of the head domain of the 30S subunit. Is located at the subunit interface close to the decoding center, probably blocks exit of the E-site tRNA. The chain is Small ribosomal subunit protein uS7 from Acinetobacter baylyi (strain ATCC 33305 / BD413 / ADP1).